The primary structure comprises 151 residues: MPKTIYVLNGPNLNLLGTREPDVYGHATLADVERLCAETASGYGLAVDCRQSNHEGDLIDFIHDARATGAIGIVINPGGYTHTSIALHDALAAVQIPAVEVHVSNIHARESFRQHSFTAKAAFASLCGFGIDGYRLAISGLAAKLGITAKA.

Catalysis depends on tyrosine 24, which acts as the Proton acceptor. 3 residues coordinate substrate: asparagine 76, histidine 82, and aspartate 89. Catalysis depends on histidine 102, which acts as the Proton donor. Residues 103–104 and arginine 113 each bind substrate; that span reads VS.

This sequence belongs to the type-II 3-dehydroquinase family. As to quaternary structure, homododecamer.

It catalyses the reaction 3-dehydroquinate = 3-dehydroshikimate + H2O. It participates in metabolic intermediate biosynthesis; chorismate biosynthesis; chorismate from D-erythrose 4-phosphate and phosphoenolpyruvate: step 3/7. Its function is as follows. Catalyzes a trans-dehydration via an enolate intermediate. The polypeptide is 3-dehydroquinate dehydratase (Rhodopseudomonas palustris (strain BisA53)).